The primary structure comprises 157 residues: Transcriptional repressor NrdR (157 aa).

Positions 1-21 (MRCPYCGSEDSQVKDSRPAED) are disordered. The segment at 3-34 (CPYCGSEDSQVKDSRPAEDGNAIRRRRICPDC) is a zinc-finger region. Over residues 11–21 (SQVKDSRPAED) the composition is skewed to basic and acidic residues. An ATP-cone domain is found at 49-139 (LMIIKKTGRK…VYRDFSHAED (91 aa)).

This sequence belongs to the NrdR family. It depends on Zn(2+) as a cofactor.

Its function is as follows. Negatively regulates transcription of bacterial ribonucleotide reductase nrd genes and operons by binding to NrdR-boxes. The sequence is that of Transcriptional repressor NrdR from Sinorhizobium medicae (strain WSM419) (Ensifer medicae).